The sequence spans 542 residues: Organic anion transporter 3 (542 aa).

The Cytoplasmic segment spans residues 1-9; sequence MTFSEILDR. Residue serine 4 is modified to Phosphoserine. Residues 10 to 30 form a helical membrane-spanning segment; sequence VGSMGPFQFLHVALLGFPILG. Residues 31-123 lie on the Extracellular side of the membrane; that stretch reads MANHNLLQIF…LVCSSNKLKE (93 aa). The N-linked (GlcNAc...) asparagine glycan is linked to asparagine 86. Residues 124-144 form a helical membrane-spanning segment; it reads MAQSIFMAGILIGGLVLGDLS. Over 145–150 the chain is Cytoplasmic; sequence DRFGRK. A helical transmembrane segment spans residues 151 to 171; the sequence is PILTCCYLLLAASGSSTAFSP. Residues 172–176 are Extracellular-facing; that stretch reads TLPIY. Residues 177 to 197 form a helical membrane-spanning segment; that stretch reads MVFRFLCGFSISGISLSTVIL. Residues 198–212 are Cytoplasmic-facing; sequence NVEWVPTKMRAITST. Residues 213–233 form a helical membrane-spanning segment; that stretch reads AIGYCYTIGQFILPGLAYAIP. The Extracellular segment spans residues 234 to 236; sequence QWR. The chain crosses the membrane as a helical span at residues 237–257; the sequence is WLQLTVSVPYFIFSLLSWWIP. Over 258–327 the chain is Cytoplasmic; the sequence is ESIRWLVLAG…FRTPILRRVT (70 aa). Residues 328–348 form a helical membrane-spanning segment; that stretch reads LCLSLAWFATGFAYYSLAMGV. Topologically, residues 349–354 are extracellular; it reads EEFGVN. The helical transmembrane segment at 355–375 threads the bilayer; sequence IYILQIIFGGVDIPAKFITIL. At 376-389 the chain is on the cytoplasmic side; the sequence is SLSYLGRHITQGAA. The helical transmembrane segment at 390 to 410 threads the bilayer; it reads LILAGAAILSLIFVPMDMSLL. Position 411 (arginine 411) is a topological domain, extracellular. A helical membrane pass occupies residues 412 to 432; that stretch reads TILAVFGKGCLSGSFSCLFLY. Topologically, residues 433 to 471 are cytoplasmic; that stretch reads TSELFPTVIRQTGMGISNVWARVGSMISPLVKITGEIQP. Residues 472–492 traverse the membrane as a helical segment; it reads FIPNIIYGTVALLGGSAALFL. Residues 493 to 542 lie on the Extracellular side of the membrane; it reads PETLNQPLPETLEDMENWFLQSKKLKQEPEAEKASQRIPLQPSGPGVDRS. Basic and acidic residues predominate over residues 518-527; that stretch reads KQEPEAEKAS. The disordered stretch occupies residues 518–542; the sequence is KQEPEAEKASQRIPLQPSGPGVDRS.

It belongs to the major facilitator (TC 2.A.1) superfamily. Organic cation transporter (TC 2.A.1.19) family.

Its subcellular location is the basolateral cell membrane. The enzyme catalyses estrone 3-sulfate(out) + glutarate(in) = estrone 3-sulfate(in) + glutarate(out). It carries out the reaction estrone 3-sulfate(in) + 2-oxoglutarate(out) = estrone 3-sulfate(out) + 2-oxoglutarate(in). The catalysed reaction is glutarate(in) + 2-oxoglutarate(out) = glutarate(out) + 2-oxoglutarate(in). It catalyses the reaction urate(in) + 2-oxoglutarate(out) = urate(out) + 2-oxoglutarate(in). The enzyme catalyses taurocholate(out) + glutarate(in) = taurocholate(in) + glutarate(out). It carries out the reaction dehydroepiandrosterone 3-sulfate(out) + glutarate(in) = dehydroepiandrosterone 3-sulfate(in) + glutarate(out). The catalysed reaction is prostaglandin F2alpha(out) + glutarate(in) = prostaglandin F2alpha(in) + glutarate(out). It catalyses the reaction prostaglandin F2alpha(out) + 2-oxoglutarate(in) = prostaglandin F2alpha(in) + 2-oxoglutarate(out). The enzyme catalyses (R)-carnitine(out) + 2-oxoglutarate(in) = (R)-carnitine(in) + 2-oxoglutarate(out). It carries out the reaction glutarate(in) + (R)-carnitine(out) = glutarate(out) + (R)-carnitine(in). The catalysed reaction is prostaglandin E2(out) + 2-oxoglutarate(in) = prostaglandin E2(in) + 2-oxoglutarate(out). It catalyses the reaction prostaglandin E2(out) + glutarate(in) = prostaglandin E2(in) + glutarate(out). The enzyme catalyses urate(in) + glutarate(out) = urate(out) + glutarate(in). It carries out the reaction taurocholate(out) + 2-oxoglutarate(in) = taurocholate(in) + 2-oxoglutarate(out). The catalysed reaction is dehydroepiandrosterone 3-sulfate(out) + 2-oxoglutarate(in) = dehydroepiandrosterone 3-sulfate(in) + 2-oxoglutarate(out). It catalyses the reaction kynurenate(out) + a dicarboxylate(in) = kynurenate(in) + a dicarboxylate(out). The enzyme catalyses (indol-3-yl)acetate(out) + a dicarboxylate(in) = (indol-3-yl)acetate(in) + a dicarboxylate(out). It carries out the reaction indoxyl sulfate(out) + a dicarboxylate(in) = indoxyl sulfate(in) + a dicarboxylate(out). The catalysed reaction is N-benzoylglycine(out) + a dicarboxylate(in) = N-benzoylglycine(in) + a dicarboxylate(out). It catalyses the reaction 3-carboxy-4-methyl-5-propyl-2-furanpropanoate(out) + a dicarboxylate(in) = 3-carboxy-4-methyl-5-propyl-2-furanpropanoate(in) + a dicarboxylate(out). The enzyme catalyses (6R)-L-erythro-5,6,7,8-tetrahydrobiopterin(out) + a dicarboxylate(in) = (6R)-L-erythro-5,6,7,8-tetrahydrobiopterin(in) + a dicarboxylate(out). It carries out the reaction L-erythro-7,8-dihydrobiopterin(out) + a dicarboxylate(in) = L-erythro-7,8-dihydrobiopterin(in) + a dicarboxylate(out). The catalysed reaction is L-sepiapterin(out) + a dicarboxylate(in) = L-sepiapterin(in) + a dicarboxylate(out). Functionally, functions as an organic anion/dicarboxylate exchanger that couples organic anion uptake indirectly to the sodium gradient. Transports organic anions such as estrone 3-sulfate (E1S) and urate in exchange for dicarboxylates such as glutarate or ketoglutarate (2-oxoglutarate). Plays an important role in the excretion of endogenous and exogenous organic anions, especially from the kidney and the brain. E1S transport is pH- and chloride-dependent and may also involve E1S/cGMP exchange. Responsible for the transport of prostaglandin E2 (PGE2) and prostaglandin F2(alpha) (PGF2(alpha)) in the basolateral side of the renal tubule. Involved in the transport of neuroactive tryptophan metabolites kynurenate and xanthurenate. Functions as a biopterin transporters involved in the uptake and the secretion of coenzymes tetrahydrobiopterin (BH4), dihydrobiopterin (BH2) and sepiapterin to urine, thereby determining baseline levels of blood biopterins. May be involved in the basolateral transport of steviol, a metabolite of the popular sugar substitute stevioside. May participate in the detoxification/ renal excretion of drugs and xenobiotics, such as the histamine H(2)-receptor antagonists fexofenadine and cimetidine, the antibiotic benzylpenicillin (PCG), the anionic herbicide 2,4-dichloro-phenoxyacetate (2,4-D), the diagnostic agent p-aminohippurate (PAH), the antiviral acyclovir (ACV), and the mycotoxin ochratoxin (OTA), by transporting these exogenous organic anions across the cell membrane in exchange for dicarboxylates such as 2-oxoglutarate. Contributes to the renal uptake of potent uremic toxins (indoxyl sulfate (IS), indole acetate (IA), hippurate/N-benzoylglycine (HA) and 3-carboxy-4-methyl-5-propyl-2-furanpropionate (CMPF)), pravastatin, PCG, E1S and dehydroepiandrosterone sulfate (DHEAS), and is partly involved in the renal uptake of temocaprilat (an angiotensin-converting enzyme (ACE) inhibitor). May contribute to the release of cortisol in the adrenals. Involved in one of the detoxification systems on the choroid plexus (CP), removes substrates such as E1S or taurocholate (TC), PCG, 2,4-D and PAH, from the cerebrospinal fluid (CSF) to the blood for eventual excretion in urine and bile. Also contributes to the uptake of several other organic compounds such as the prostanoids prostaglandin E(2) and prostaglandin F(2-alpha), L-carnitine, and the therapeutic drugs allopurinol, 6-mercaptopurine (6-MP) and 5-fluorouracil (5-FU). Mediates the transport of PAH, PCG, and the statins pravastatin and pitavastatin, from the cerebrum into the blood circulation across the blood-brain barrier (BBB). In summary, plays a role in the efflux of drugs and xenobiotics, helping reduce their undesired toxicological effects on the body. This is Organic anion transporter 3 (SLC22A8) from Oryctolagus cuniculus (Rabbit).